A 444-amino-acid polypeptide reads, in one-letter code: 23S rRNA (uracil(1939)-C(5))-methyltransferase RlmD (444 aa).

Residues 5–67 (RNRFDRTPFQ…RHFDEAKTVE (63 aa)) enclose the TRAM domain. Residues cysteine 80, cysteine 86, cysteine 89, and cysteine 168 each contribute to the [4Fe-4S] cluster site. 6 residues coordinate S-adenosyl-L-methionine: glutamine 276, phenylalanine 305, asparagine 310, glutamate 326, aspartate 353, and aspartate 374. Cysteine 400 (nucleophile) is an active-site residue.

This sequence belongs to the class I-like SAM-binding methyltransferase superfamily. RNA M5U methyltransferase family. RlmD subfamily.

It catalyses the reaction uridine(1939) in 23S rRNA + S-adenosyl-L-methionine = 5-methyluridine(1939) in 23S rRNA + S-adenosyl-L-homocysteine + H(+). In terms of biological role, catalyzes the formation of 5-methyl-uridine at position 1939 (m5U1939) in 23S rRNA. This chain is 23S rRNA (uracil(1939)-C(5))-methyltransferase RlmD, found in Xanthomonas campestris pv. campestris (strain 8004).